A 109-amino-acid chain; its full sequence is Cell division suppressor protein YneA (109 aa).

The region spanning 39 to 90 (SEVNVSEGDSLWALADQYAGKSDMAKADFVSWVEKENNLADGHVEAGESVVI) is the LysM domain.

It belongs to the YneA family.

Its subcellular location is the cytoplasm. In terms of biological role, inhibits cell division during the SOS response. Affects a later stage of the cell division protein assembly, after the assembly of the Z ring, by probably suppressing recruitment of FtsL and/or DivIC to the division machinery. In Listeria monocytogenes serotype 4b (strain F2365), this protein is Cell division suppressor protein YneA.